The primary structure comprises 252 residues: Triosephosphate isomerase (252 aa).

9-11 serves as a coordination point for substrate; that stretch reads NWK. The Electrophile role is filled by His95. Glu167 (proton acceptor) is an active-site residue. Substrate is bound by residues Gly173, Ser213, and 234–235; that span reads GG.

It belongs to the triosephosphate isomerase family. In terms of assembly, homodimer.

The protein localises to the cytoplasm. It carries out the reaction D-glyceraldehyde 3-phosphate = dihydroxyacetone phosphate. Its pathway is carbohydrate biosynthesis; gluconeogenesis. The protein operates within carbohydrate degradation; glycolysis; D-glyceraldehyde 3-phosphate from glycerone phosphate: step 1/1. Functionally, involved in the gluconeogenesis. Catalyzes stereospecifically the conversion of dihydroxyacetone phosphate (DHAP) to D-glyceraldehyde-3-phosphate (G3P). In Syntrophotalea carbinolica (strain DSM 2380 / NBRC 103641 / GraBd1) (Pelobacter carbinolicus), this protein is Triosephosphate isomerase.